A 1485-amino-acid chain; its full sequence is Putative E3 ubiquitin-protein ligase LIN-2 (1485 aa).

Residues Glu-337–Asp-353 show a composition bias toward acidic residues. Disordered regions lie at residues Glu-337 to Pro-363, Asn-384 to Ala-450, and Arg-462 to Met-507. Over residues Ser-438 to Ala-450 the composition is skewed to low complexity. A compositionally biased stretch (polar residues) spans Ser-466 to Ser-484. In terms of domain architecture, U-box spans Lys-510–Leu-585. WD repeat units follow at residues Ser-1194–Asp-1232, Glu-1246–Ile-1283, Ser-1409–Ser-1448, and Gly-1454–Asp-1485.

The catalysed reaction is S-ubiquitinyl-[E2 ubiquitin-conjugating enzyme]-L-cysteine + [acceptor protein]-L-lysine = [E2 ubiquitin-conjugating enzyme]-L-cysteine + N(6)-ubiquitinyl-[acceptor protein]-L-lysine.. It participates in protein modification; protein ubiquitination. In terms of biological role, putative E3 ubiquitin-protein ligase involved in the rhizobial infection process. Plays an important role in the early steps of infection thread formation and in growth and differentiation of nodules. This is Putative E3 ubiquitin-protein ligase LIN-2 from Lotus japonicus (Lotus corniculatus var. japonicus).